Reading from the N-terminus, the 353-residue chain is Membrane lipoprotein TmpC (353 aa).

The N-terminal stretch at 1–20 (MREKWVRAFAGVFCAMLLIG) is a signal peptide. Cys-21 carries N-palmitoyl cysteine lipidation. Cys-21 is lipidated: S-diacylglycerol cysteine. Asp-47 contributes to the guanosine binding site. Asp-47 contacts inosine. Residues 47 to 48 (DS) and Phe-56 contribute to the adenosine site. 6 residues coordinate guanosine: Asn-57, Asp-128, Phe-206, Gly-232, Asp-258, and Lys-280. Inosine contacts are provided by Asn-57 and Asp-128. Adenosine-binding residues include Asp-128, Phe-206, Gly-232, Asp-258, and Lys-280. The inosine site is built by Gly-232, Asp-258, and Lys-280.

It belongs to the BMP lipoprotein family. Monomer.

It is found in the cell membrane. Functionally, binds purine nucleosides and may play a role in purine nucleoside uptake. May be part of an ABC-type nucleoside uptake system. Has highest affinity for guanosine, followed by inosine and adenosine. Has very low affinity for cytidine and does not bind thymidine. The sequence is that of Membrane lipoprotein TmpC (tmpC) from Treponema pallidum (strain Nichols).